A 590-amino-acid polypeptide reads, in one-letter code: Aspartate--tRNA ligase (590 aa).

Glu-180 contributes to the L-aspartate binding site. The tract at residues 204–207 (QLFK) is aspartate. Arg-226 is an L-aspartate binding site. ATP-binding positions include 226–228 (RDE) and Gln-235. His-454 is a binding site for L-aspartate. Glu-488 contacts ATP. Arg-495 lines the L-aspartate pocket. 540-543 (GFDR) contacts ATP.

It belongs to the class-II aminoacyl-tRNA synthetase family. Type 1 subfamily. In terms of assembly, homodimer.

It is found in the cytoplasm. The enzyme catalyses tRNA(Asp) + L-aspartate + ATP = L-aspartyl-tRNA(Asp) + AMP + diphosphate. In terms of biological role, catalyzes the attachment of L-aspartate to tRNA(Asp) in a two-step reaction: L-aspartate is first activated by ATP to form Asp-AMP and then transferred to the acceptor end of tRNA(Asp). This Clostridium kluyveri (strain NBRC 12016) protein is Aspartate--tRNA ligase.